The following is a 651-amino-acid chain: Protein cueball (651 aa).

The signal sequence occupies residues 1 to 21 (MILRLFILLSIITVYLQLSVG). Residues 22 to 540 (IQQQFEFAIT…VCLAPNAWTG (519 aa)) are Extracellular-facing. N-linked (GlcNAc...) asparagine glycans are attached at residues N77, N102, and N114. 3 LDL-receptor class B repeats span residues 115–162 (RTIY…DICG), 163–207 (RKLY…DQGA), and 208–253 (KRIF…TRNA). A glycan (N-linked (GlcNAc...) asparagine) is linked at N183. A disordered region spans residues 290-311 (VEGEEGTGAMDDNDIWPVGDFE). N324 carries an N-linked (GlcNAc...) asparagine glycan. EGF-like domains follow at residues 374–408 (QLDE…TRCE), 409–440 (TNEC…YSGE), and 443–480 (EVKK…LRCE). Cystine bridges form between C383/C396, C398/C407, C412/C421, C416/C431, C447/C457, C451/C468, and C470/C479. N-linked (GlcNAc...) asparagine glycosylation is found at N482 and N499. A helical transmembrane segment spans residues 541–561 (SVLMPLMISLILILLLLTIFI). Topologically, residues 562-651 (HGLRRLYKPK…LIHNMEDDLY (90 aa)) are cytoplasmic.

Belongs to the cueball family.

Its subcellular location is the cell membrane. Its function is as follows. Has a role in spermatogenesis and oogenesis. The chain is Protein cueball from Drosophila willistoni (Fruit fly).